The chain runs to 106 residues: Replication restart protein PriB (106 aa).

One can recognise an SSB domain in the interval 4-103; sequence TNRLVLSGTV…LHAEQIEFID (100 aa).

The protein belongs to the PriB family. Homodimer. Interacts with PriA and DnaT. Component of the replication restart primosome. Primosome assembly occurs via a 'hand-off' mechanism. PriA binds to replication forks, subsequently PriB then DnaT bind; DnaT then displaces ssDNA to generate the helicase loading substrate.

In terms of biological role, involved in the restart of stalled replication forks, which reloads the replicative helicase on sites other than the origin of replication; the PriA-PriB pathway is the major replication restart pathway. During primosome assembly it facilitates complex formation between PriA and DnaT on DNA; stabilizes PriA on DNA. Stimulates the DNA unwinding activity of PriA helicase. The protein is Replication restart protein PriB of Yersinia pestis.